The following is an 853-amino-acid chain: DNA mismatch repair protein MutS (853 aa).

614–621 (GPNMGGKS) is an ATP binding site.

The protein belongs to the DNA mismatch repair MutS family.

Functionally, this protein is involved in the repair of mismatches in DNA. It is possible that it carries out the mismatch recognition step. This protein has a weak ATPase activity. The protein is DNA mismatch repair protein MutS of Escherichia coli O157:H7 (strain EC4115 / EHEC).